The sequence spans 714 residues: Polyribonucleotide nucleotidyltransferase (714 aa).

Residues D488 and D494 each coordinate Mg(2+). The 60-residue stretch at 555–614 folds into the KH domain; that stretch reads PRIEVMNIPTDKIRDVIGSGGKVIREIVEKTGAKINIEDDGTVKIASSNGKEIEAAKKWI. In terms of domain architecture, S1 motif spans 624–692; that stretch reads GEIYEGTVVK…ERGKVRLSMK (69 aa).

This sequence belongs to the polyribonucleotide nucleotidyltransferase family. Mg(2+) serves as cofactor.

It localises to the cytoplasm. It catalyses the reaction RNA(n+1) + phosphate = RNA(n) + a ribonucleoside 5'-diphosphate. Its function is as follows. Involved in mRNA degradation. Catalyzes the phosphorolysis of single-stranded polyribonucleotides processively in the 3'- to 5'-direction. In Brucella melitensis biotype 2 (strain ATCC 23457), this protein is Polyribonucleotide nucleotidyltransferase.